We begin with the raw amino-acid sequence, 228 residues long: Ribosomal RNA small subunit methyltransferase G (228 aa).

S-adenosyl-L-methionine-binding positions include G89, L94, 140-141, and R159; that span reads VE.

The protein belongs to the methyltransferase superfamily. RNA methyltransferase RsmG family.

The protein resides in the cytoplasm. The enzyme catalyses guanosine(527) in 16S rRNA + S-adenosyl-L-methionine = N(7)-methylguanosine(527) in 16S rRNA + S-adenosyl-L-homocysteine. In terms of biological role, specifically methylates the N7 position of guanine in position 527 of 16S rRNA. The chain is Ribosomal RNA small subunit methyltransferase G from Burkholderia ambifaria (strain ATCC BAA-244 / DSM 16087 / CCUG 44356 / LMG 19182 / AMMD) (Burkholderia cepacia (strain AMMD)).